We begin with the raw amino-acid sequence, 165 residues long: AP-3 complex subunit sigma (165 aa).

The protein belongs to the adaptor complexes small subunit family. As to quaternary structure, adaptor protein complex 3 (AP-3) is a heterotetramer composed of 2 large adaptins (apl5 and apl6), a medium adaptin (apm3) and a small adaptin (aps3).

It localises to the golgi apparatus. It is found in the cytoplasmic vesicle membrane. In terms of biological role, part of the AP-3 complex, an adaptor-related complex which is not clathrin-associated. The complex is associated with the Golgi region as well as more peripheral structures. It facilitates the budding of vesicles from the Golgi membrane and may be directly involved in trafficking to the vacuole. This is AP-3 complex subunit sigma (aps3) from Schizosaccharomyces pombe (strain 972 / ATCC 24843) (Fission yeast).